The following is a 132-amino-acid chain: MKAITSNVSKSLPIGARLKCIDNTGAREVEIISVKGFKGVRRRLASAGVGDMVVISVKKGTADMRREVTTAVVVRQKKEYRRADGLRVKFEDNAAVIITEDGVLKGSEIRGPIAKEAADLWPAIGSAASIIV.

This sequence belongs to the universal ribosomal protein uL14 family. As to quaternary structure, part of the 50S ribosomal subunit. Forms a cluster with proteins L3 and L24e, part of which may contact the 16S rRNA in 2 intersubunit bridges.

Binds to 23S rRNA. Forms part of two intersubunit bridges in the 70S ribosome. The sequence is that of Large ribosomal subunit protein uL14 from Methanosphaera stadtmanae (strain ATCC 43021 / DSM 3091 / JCM 11832 / MCB-3).